A 105-amino-acid polypeptide reads, in one-letter code: uncharacterized protein (105 aa).

The interval glutamate 47–phenylalanine 105 is disordered. The span at arginine 86 to glutamate 95 shows a compositional bias: basic and acidic residues.

This is an uncharacterized protein from Bacillus subtilis (strain 168).